A 1087-amino-acid chain; its full sequence is 2'-5'-oligoadenylate synthase 3 (1087 aa).

The residue at position 1 (methionine 1) is an N-acetylmethionine. Residues 6–343 (TPAAALDRFV…GDPVQSWKGP (338 aa)) form an OAS domain 1 region. Interaction with dsRNA regions lie at residues 12–57 (DRFV…VLKT) and 186–200 (ELRRNFVNIRPAKLK). The tract at residues 344-410 (GLPRAGCSGL…VPGMALDLSQ (67 aa)) is linker. Threonine 365 carries the phosphothreonine modification. 2 OAS domain regions span residues 411-742 (IPTK…PWDV) and 750-1084 (TPAG…WPVK). Serine 804 is an ATP binding site. The Mg(2+) site is built by aspartate 816, aspartate 818, and aspartate 888. Residues arginine 947, lysine 950, and glutamine 969 each coordinate ATP.

Belongs to the 2-5A synthase family. As to quaternary structure, monomer. Requires Mg(2+) as cofactor. In terms of tissue distribution, present at high level in placenta trophoblast.

The protein resides in the cytoplasm. It localises to the nucleus. It carries out the reaction 3 ATP = 5'-triphosphoadenylyl-(2'-&gt;5')-adenylyl-(2'-&gt;5')-adenosine + 2 diphosphate. Produced as a latent enzyme which is activated by dsRNA generated during the course of viral infection. Strongly activated by long dsRNAs at least 50 nucleotides in length. ssRNA does not activate the enzyme. Functionally, interferon-induced, dsRNA-activated antiviral enzyme which plays a critical role in cellular innate antiviral response. In addition, it may also play a role in other cellular processes such as apoptosis, cell growth, differentiation and gene regulation. Synthesizes preferentially dimers of 2'-5'-oligoadenylates (2-5A) from ATP which then bind to the inactive monomeric form of ribonuclease L (RNase L) leading to its dimerization and subsequent activation. Activation of RNase L leads to degradation of cellular as well as viral RNA, resulting in the inhibition of protein synthesis, thus terminating viral replication. Can mediate the antiviral effect via the classical RNase L-dependent pathway or an alternative antiviral pathway independent of RNase L. Displays antiviral activity against Chikungunya virus (CHIKV), Dengue virus, Sindbis virus (SINV) and Semliki forest virus (SFV). This is 2'-5'-oligoadenylate synthase 3 (OAS3) from Homo sapiens (Human).